The sequence spans 84 residues: Conophysin-R (84 aa).

7 disulfide bridges follow: Cys-6-Cys-46, Cys-9-Cys-20, Cys-14-Cys-36, Cys-21-Cys-26, Cys-53-Cys-71, Cys-65-Cys-83, and Cys-72-Cys-77.

Expressed by the venom duct.

The protein localises to the secreted. In terms of biological role, targets vasopressin-oxytocin related receptors. No effect observed when injected into goldfish or into mice. This Conus radiatus (Rayed cone) protein is Conophysin-R.